Reading from the N-terminus, the 508-residue chain is BTB/POZ domain-containing protein At3g03510 (508 aa).

Residues 11-77 (QDLDLYVKGV…CYGYKIELSA (67 aa)) enclose the BTB domain. In terms of domain architecture, NPH3 spans 156-414 (TRLLQDLITL…MQVLFVSQMQ (259 aa)). Tyr-355 is subject to Phosphotyrosine.

It belongs to the NPH3 family.

The protein operates within protein modification; protein ubiquitination. May act as a substrate-specific adapter of an E3 ubiquitin-protein ligase complex (CUL3-RBX1-BTB) which mediates the ubiquitination and subsequent proteasomal degradation of target proteins. This is BTB/POZ domain-containing protein At3g03510 from Arabidopsis thaliana (Mouse-ear cress).